A 160-amino-acid polypeptide reads, in one-letter code: Large ribosomal subunit protein bL19 (160 aa).

The protein belongs to the bacterial ribosomal protein bL19 family.

This protein is located at the 30S-50S ribosomal subunit interface and may play a role in the structure and function of the aminoacyl-tRNA binding site. This Prochlorococcus marinus subsp. pastoris (strain CCMP1986 / NIES-2087 / MED4) protein is Large ribosomal subunit protein bL19.